The sequence spans 113 residues: Putative increased recombination centers protein 14 (113 aa).

The sequence is that of Putative increased recombination centers protein 14 (IRC14) from Saccharomyces cerevisiae (strain ATCC 204508 / S288c) (Baker's yeast).